We begin with the raw amino-acid sequence, 660 residues long: DNA mismatch repair protein MutL (660 aa).

The disordered stretch occupies residues 414–433 (SSVKHASRPQNTFTETDHPN).

Belongs to the DNA mismatch repair MutL/HexB family.

Functionally, this protein is involved in the repair of mismatches in DNA. It is required for dam-dependent methyl-directed DNA mismatch repair. May act as a 'molecular matchmaker', a protein that promotes the formation of a stable complex between two or more DNA-binding proteins in an ATP-dependent manner without itself being part of a final effector complex. This is DNA mismatch repair protein MutL from Streptococcus pyogenes serotype M6 (strain ATCC BAA-946 / MGAS10394).